The primary structure comprises 350 residues: Proton-activated chloride channel (350 aa).

The disordered stretch occupies residues 1–51 (MEAIRKELSRSYQELNDETDPIARDPEGAQEEEQEEAASAVVPDRDSDRSN). Over 1-63 (MEAIRKELSR…VHFSRTCLKN (63 aa)) the chain is Cytoplasmic. The helical transmembrane segment at 64–84 (VFSVLLIFVYLLLMGVAVFLV) threads the bilayer. Residues 85-297 (YQTITDFRDK…KDPYIQEIQD (213 aa)) are Extracellular-facing. A helical membrane pass occupies residues 298–318 (IITANPWSMIALLCSVFLVLF). At 319 to 350 (KAADFAKLSVKWMIKVRRRHLKKRTRELNHIS) the chain is on the cytoplasmic side.

This sequence belongs to the proton-activated chloride channel family.

It localises to the cell membrane. The enzyme catalyses chloride(in) = chloride(out). Functionally, chloride channel gated by pH that facilitates the entry of chloride ions into cells upon exposure to extracellular acidic pH. The chain is Proton-activated chloride channel from Xenopus laevis (African clawed frog).